A 61-amino-acid polypeptide reads, in one-letter code: Small ribosomal subunit protein uS14 (61 aa).

4 residues coordinate Zn(2+): cysteine 24, cysteine 27, cysteine 40, and cysteine 43.

The protein belongs to the universal ribosomal protein uS14 family. Zinc-binding uS14 subfamily. As to quaternary structure, part of the 30S ribosomal subunit. Contacts proteins S3 and S10. It depends on Zn(2+) as a cofactor.

Functionally, binds 16S rRNA, required for the assembly of 30S particles and may also be responsible for determining the conformation of the 16S rRNA at the A site. This chain is Small ribosomal subunit protein uS14, found in Brevibacillus brevis (strain 47 / JCM 6285 / NBRC 100599).